A 304-amino-acid polypeptide reads, in one-letter code: Secreted mono- and diacylglycerol lipase MDL2 (304 aa).

A signal peptide spans 1–19 (MILGRTISLFLGCSALVSG). Cysteines 55 and 297 form a disulfide. N-linked (GlcNAc...) asparagine glycosylation is found at Asn102 and Asn161. Catalysis depends on Ser171, which acts as the Nucleophile. Asp228 is an active-site residue. Asn253 carries N-linked (GlcNAc...) asparagine glycosylation. The active site involves His281.

This sequence belongs to the AB hydrolase superfamily. Lipase family. Class 3 subfamily.

The protein resides in the secreted. It is found in the cell wall. The catalysed reaction is a monoacylglycerol + H2O = glycerol + a fatty acid + H(+). It catalyses the reaction a diacylglycerol + H2O = a monoacylglycerol + a fatty acid + H(+). Functionally, secreted lipase involved in Dandruff and seborrheic dermatitis (D/SD) probably via lipase-mediated breakdown of sebaceous lipids and release of irritating free fatty acids. Shows activity against monoglyceride and diglyceride substrates, but not triglyceride substrates and does not exhibit regio-selective production of diacylglycerols. Hydrolyzes both 1,2- and 1,3-diacylglycerols. Also hydrolyzes distearin, dilinolein and dipalmitolein. Cleaves oleic acid from 1,2 isomers of diolein on both the 1 and the 2 position of the glycerol backbone, resulting mainly in free fatty acids but no monoolein is detected. Shows activity on monoolein and liberates mostly free fatty acids, but can also perform the reverse reaction and produce diolein. The chain is Secreted mono- and diacylglycerol lipase MDL2 from Malassezia globosa (strain ATCC MYA-4612 / CBS 7966) (Dandruff-associated fungus).